The chain runs to 299 residues: Coenzyme PQQ synthesis protein B (299 aa).

The protein belongs to the PqqB family.

Its pathway is cofactor biosynthesis; pyrroloquinoline quinone biosynthesis. Its function is as follows. May be involved in the transport of PQQ or its precursor to the periplasm. The protein is Coenzyme PQQ synthesis protein B of Xanthomonas campestris pv. campestris (strain 8004).